Reading from the N-terminus, the 566-residue chain is MKKRRSSKVILSLAIVVALLAAVEPNAALAAAPPSAMQSYVEAMQPGWNLGNSLDAVGADETLARGNPRITKELIQNIAAQGYKSIRIPVTWDSHIGAAPNYQIEAAYLNRVQEVVQWALDANLYVMINVHHDSWLWISKMESQHDQVLARYNAIWTQIANKFKNSPSKLMFESVNEPRFTDGGTTDEAKQQKMLDELNVSFFNIVRNSGGQNATRPLVLSTLEASPTQERMTALYNTMTKLNDKNLIATVHFYGFWPFSVNIAGYTKFDAETQNDIITTFDNVYNTFVAKGIPVVVGEYGLLGFDKNTGVIEQGEKLKFFEFFAQYVKQKSISTMLWDNGQHFNRTSFKWSDPDLFNMIKASWTGRSSTASSDLIHVKQGTAVKDTSVQLNLNGNTLTSLSVNGTTLKSGTDYTLNSSRLTFKASQLTKLTSLGKLGVNATIVTKFNRGADWKFNVVLYNTPKLSSTTGTTSSFAIPTAFNGDQLATMEAVYVNGGNAGPHNWTSFKEFETTFSPAYSEGKIKLQQAFFNEVNDTTVTLKFQFWSGEIVNYTIKKSGSTVTGTAS.

Residues 1 to 30 (MKKRRSSKVILSLAIVVALLAAVEPNAALA) form the signal peptide. The active-site Proton donor is glutamate 177. Glutamate 299 functions as the Nucleophile in the catalytic mechanism.

It belongs to the glycosyl hydrolase 5 (cellulase A) family.

The enzyme catalyses Endohydrolysis of (1-&gt;4)-beta-D-glucosidic linkages in cellulose, lichenin and cereal beta-D-glucans.. The polypeptide is Endoglucanase B (celB) (Paenibacillus lautus (Bacillus lautus)).